Reading from the N-terminus, the 361-residue chain is PTI1-like tyrosine-protein kinase 1 (361 aa).

Residues 16-43 (EEQQLKSSQQQSDANHKNSKPAPVAKHE) form a disordered region. The 283-residue stretch at 68-350 (FGSKALIGEG…IVVKALQPLL (283 aa)) folds into the Protein kinase domain. Residues 74 to 82 (IGEGSYGRV) and Lys96 contribute to the ATP site. The Proton acceptor role is filled by Asp200.

The protein belongs to the protein kinase superfamily. Tyr protein kinase family. In terms of assembly, interacts with OXI1. Autophosphorylated and phosphorylated by OXI1.

Its subcellular location is the cell membrane. The catalysed reaction is L-tyrosyl-[protein] + ATP = O-phospho-L-tyrosyl-[protein] + ADP + H(+). The protein is PTI1-like tyrosine-protein kinase 1 (PTI11) of Arabidopsis thaliana (Mouse-ear cress).